The chain runs to 1235 residues: Serine/threonine-protein kinase TAO2 (1235 aa).

S9 carries the phosphoserine modification. The Protein kinase domain occupies 28-281; that stretch reads FSDLREIGHG…SEVLLKHRFV (254 aa). Residues 34-42 and K57 each bind ATP; that span reads IGHGSFGAV. D151 functions as the Proton acceptor in the catalytic mechanism. S181 bears the Phosphoserine mark. A disordered region spans residues 318-457; the sequence is QEAPNGPGAE…TSTTSSARRR (140 aa). The segment covering 350-374 has biased composition (low complexity); it reads SSHSVPSMSISASSQSSSVNSLADA. Over residues 375–393 the composition is skewed to acidic residues; the sequence is SDNEEEEEEEEEEEEEEEG. Residues 394–409 are compositionally biased toward basic and acidic residues; that stretch reads PEAREMAMMQEGEHTV. Phosphoserine is present on S414. 2 coiled-coil regions span residues 486 to 547 and 574 to 601; these read SALR…RRHQ and KELA…LQEN. S656 bears the Phosphoserine mark. The stretch at 681–713 forms a coiled coil; it reads LRQHEATRELELRQLQAVQRTRAELTRLQHQTE. Disordered stretches follow at residues 732–777, 804–835, and 891–939; these read HAAQ…QPCS, KEGA…GSLV, and QGPA…RPCP. Residues 766–777 show a composition bias toward polar residues; it reads NTGTPIEQQPCS. Phosphoserine occurs at positions 777, 825, and 827. Residues 899–908 are compositionally biased toward acidic residues; the sequence is PEEEEEEEEG. Residues 924–934 are compositionally biased toward pro residues; the sequence is PDIPPEPPPTH. A run of 2 helical transmembrane segments spans residues 965–985 and 987–1007; these read LLPL…GGGL and AALL…LLLC. Phosphoserine occurs at positions 1011 and 1031. The next 3 membrane-spanning stretches (helical) occupy residues 1012–1032, 1043–1063, and 1166–1186; these read LPSS…VLGL, LGLG…LVAM, and QGLA…WGLL. The interval 1198-1235 is disordered; sequence LPRSQRQLGPPASRQPLPGTLAGRRSRTRQSRALPPWR.

The protein belongs to the protein kinase superfamily. STE Ser/Thr protein kinase family. STE20 subfamily. Interacts with MAP2K3 and MAP2K6. Self-associates. Interacts with tubulins through the C-terminal domain. Interacts with MAP3K7 and interferes with MAP3K7-binding to CHUK and thus prevents NF-kappa-B activation. Isoform 2 interacts with PCDH8; this complex may also include CDH2. Mg(2+) serves as cofactor. In terms of processing, isoforms 1 and 2 are autophosphorylated. C-terminal cleavage of isoform 1 and subsequent nuclear localization requires CASP9 activity. Post-translationally, autophosphorylated. Phosphorylated by ATM. In terms of processing, phosphorylated on Ser-1031 by MAPK14. This phosphorylation is required PCDH8 for endocytosis. As to expression, ubiquitously expressed, with a higher level of expression in testis and brain.

It is found in the cytoplasmic vesicle membrane. It localises to the cytoplasm. The protein localises to the cytoskeleton. Its subcellular location is the nucleus. The protein resides in the cell projection. It is found in the dendrite. The catalysed reaction is L-seryl-[protein] + ATP = O-phospho-L-seryl-[protein] + ADP + H(+). The enzyme catalyses L-threonyl-[protein] + ATP = O-phospho-L-threonyl-[protein] + ADP + H(+). Selectively inhibited by the enantiopure organoruthenium inhibitor 9E1. Activated following arsenic trioxide (As(2)O(3)) treatment. Functionally, serine/threonine-protein kinase involved in different processes such as membrane blebbing and apoptotic bodies formation DNA damage response and MAPK14/p38 MAPK stress-activated MAPK cascade. Phosphorylates itself, MBP, activated MAPK8, MAP2K3, MAP2K6 and tubulins. Activates the MAPK14/p38 MAPK signaling pathway through the specific activation and phosphorylation of the upstream MAP2K3 and MAP2K6 kinases. In response to DNA damage, involved in the G2/M transition DNA damage checkpoint by activating the p38/MAPK14 stress-activated MAPK cascade, probably by mediating phosphorylation of upstream MAP2K3 and MAP2K6 kinases. Isoform 1, but not isoform 2, plays a role in apoptotic morphological changes, including cell contraction, membrane blebbing and apoptotic bodies formation. This function, which requires the activation of MAPK8/JNK and nuclear localization of C-terminally truncated isoform 1, may be linked to the mitochondrial CASP9-associated death pathway. Isoform 1 binds to microtubules and affects their organization and stability independently of its kinase activity. Prevents MAP3K7-mediated activation of CHUK, and thus NF-kappa-B activation, but not that of MAPK8/JNK. May play a role in the osmotic stress-MAPK8 pathway. Isoform 2, but not isoform 1, is required for PCDH8 endocytosis. Following homophilic interactions between PCDH8 extracellular domains, isoform 2 phosphorylates and activates MAPK14/p38 MAPK which in turn phosphorylates isoform 2. This process leads to PCDH8 endocytosis and CDH2 cointernalization. Both isoforms are involved in MAPK14 phosphorylation. The polypeptide is Serine/threonine-protein kinase TAO2 (TAOK2) (Homo sapiens (Human)).